A 302-amino-acid polypeptide reads, in one-letter code: Giardin subunit alpha-5 (302 aa).

Annexin repeat units lie at residues 1–72 (MTST…VNMW), 74–144 (SRHE…VAGW), 153–226 (GSVE…AAHF), and 230–298 (GLPV…TLWR).

Belongs to the annexin family. Giardin subunit alpha subfamily.

The protein resides in the cytoplasm. The protein localises to the cytoskeleton. Functionally, giardins are involved in parasite attachment to the intestinal mucosa and in the cytoskeletal disassembly and reassembly that marks the transition from infectious trophozoite to transmissible cyst. They may interact with other cytoskeletal proteins such as microtubules in the microribbons or crossbridges, to maintain the integrity of the ventral disk. In Giardia intestinalis (Giardia lamblia), this protein is Giardin subunit alpha-5.